A 414-amino-acid polypeptide reads, in one-letter code: Multifunctional CCA protein (414 aa).

Residues Gly-8 and Arg-11 each contribute to the ATP site. Residues Gly-8 and Arg-11 each contribute to the CTP site. 2 residues coordinate Mg(2+): Asp-21 and Asp-23. The ATP site is built by Arg-91, Arg-137, and Arg-140. Positions 91, 137, and 140 each coordinate CTP. In terms of domain architecture, HD spans 226–327 (TGVHVMMVVD…VTLFERCDAF (102 aa)).

Belongs to the tRNA nucleotidyltransferase/poly(A) polymerase family. Bacterial CCA-adding enzyme type 1 subfamily. Monomer. Can also form homodimers and oligomers. Mg(2+) serves as cofactor. It depends on Ni(2+) as a cofactor.

The catalysed reaction is a tRNA precursor + 2 CTP + ATP = a tRNA with a 3' CCA end + 3 diphosphate. It carries out the reaction a tRNA with a 3' CCA end + 2 CTP + ATP = a tRNA with a 3' CCACCA end + 3 diphosphate. Its function is as follows. Catalyzes the addition and repair of the essential 3'-terminal CCA sequence in tRNAs without using a nucleic acid template. Adds these three nucleotides in the order of C, C, and A to the tRNA nucleotide-73, using CTP and ATP as substrates and producing inorganic pyrophosphate. tRNA 3'-terminal CCA addition is required both for tRNA processing and repair. Also involved in tRNA surveillance by mediating tandem CCA addition to generate a CCACCA at the 3' terminus of unstable tRNAs. While stable tRNAs receive only 3'-terminal CCA, unstable tRNAs are marked with CCACCA and rapidly degraded. The protein is Multifunctional CCA protein of Herminiimonas arsenicoxydans.